The following is a 127-amino-acid chain: Odontogenesis-associated phosphoprotein (127 aa).

A signal peptide spans 1–23; sequence MAPGFHFSWLLVSWLVVTTVKGQ.

Expressed in enamel organs and not expressed in the heart, kidney, or spleen.

The protein resides in the secreted. May promote nucleation of hydroxyapatite. In Rattus norvegicus (Rat), this protein is Odontogenesis-associated phosphoprotein.